The sequence spans 698 residues: MGDPGLAKLQFAPFNSALDVGFWHELTQKKLNEYRLDEAPKDIKGYYYNGDSAGLPTRLTLEFSAFDMSASTPAHCCPAMGTLHNTNTLEAFKTADKKLLLEQSANEIWEAIKSGAALENPMLLNKFLLLTFADLKKYHFYYWFCCPALCLPESIPLIRGPVSLDQRLSPKQIQALEHAYDDLCRAEGVTALPYFLFKYDDDTVLVSLLKHYSDFFQGQRTKITVGVYDPCNLAQYPGWPLRNFLVLAAHRWSGSFQSVEVLCFRDRTMQGARDVTHSIIFEVKLPEMAFSPDCPKAVGWEKNQKGGMGPRMVNLSGCMDPKRLAESSVDLNLKLMCWRLVPTLDLDKVVSVKCLLLGAGTLGCNVARTLMGWGVRHVTFVDNAKISYSNPVRQPLYEFEDCLGGGKPKALAAAERLQKIFPGVNARGFNMSIPMPGHPVNFSDVTMEQARRDVEQLEQLIDNHDVIFLLMDTRESRWLPTVIAASKRKLVINAALGFDTFVVMRHGLKKPKQQGAGDLCPSHLVAPADLGSSLFANIPGYKLGCYFCNDVVAPGDSTRDRTLDQQCTVSRPGLAVIAGALAVELMVSVLQHPEGGYAIASSSDDRMNEPPTSLGLVPHQIRGFLSRFDNVLPVSLAFDKCTACSPKVLDQYEREGFTFLAKVFNSSHSFLEDLTGLTLLHQETQAAEIWDMSDEETV.

The short motif at 11-13 (FAP) is the FAP motif element. A Glycyl lysine isopeptide (Lys-Gly) (interchain with G-Cter in ubiquitin) cross-link involves residue lysine 41. The Glycyl thioester intermediate role is filled by cysteine 567. Serine 693 carries the phosphoserine modification.

It belongs to the ATG7 family. In terms of assembly, homodimer. Interacts with ATG3; this interaction is essential for the transfer of ATG8-like proteins's thioester from ATG7 to ATG3 and plays a role in the conjugation of ATG12 to ATG5. Interacts with ATG12. Interacts with ATG10. Forms intermediate conjugates with GABARAPL1. Forms intermediate conjugates with ATG8-like proteins such as GABARAP, GABARAPL2 or MAP1LC3A. Interacts with EP300 acetyltransferase. Interacts with FOXO1. Acetylated by EP300. Post-translationally, polyubiquitinated on Lys-41 via 'Lys-63'-linked ubiquitin by TRIM32; this modification positiely regulates ATG8 and ATG12 activating enzyme activity leading to initiation of autophagy under metabolic stress. In terms of tissue distribution, widely expressed, especially in kidney, liver, lymph nodes and bone marrow.

It localises to the cytoplasm. Its subcellular location is the preautophagosomal structure. Functionally, E1-like activating enzyme involved in the 2 ubiquitin-like systems required for cytoplasm to vacuole transport (Cvt) and autophagy. Activates ATG12 for its conjugation with ATG5 as well as the ATG8 family proteins for their conjugation with phosphatidylethanolamine. Both systems are needed for the ATG8 association to Cvt vesicles and autophagosomes membranes. Facilitates LC3-I lipidation with phosphatidylethanolamine to form LC3-II which is found on autophagosomal membranes. Required for autophagic death induced by caspase-8 inhibition. Required for mitophagy which contributes to regulate mitochondrial quantity and quality by eliminating the mitochondria to a basal level to fulfill cellular energy requirements and preventing excess ROS production. Modulates p53/TP53 activity to regulate cell cycle and survival during metabolic stress. Also plays a key role in the maintenance of axonal homeostasis, the prevention of axonal degeneration, the maintenance of hematopoietic stem cells, the formation of Paneth cell granules, as well as in adipose differentiation. Plays a role in regulating the liver clock and glucose metabolism by mediating the autophagic degradation of CRY1 (clock repressor) in a time-dependent manner. In Mus musculus (Mouse), this protein is Ubiquitin-like modifier-activating enzyme ATG7.